Here is a 344-residue protein sequence, read N- to C-terminus: Methionine import ATP-binding protein MetN (344 aa).

The 240-residue stretch at 2–241 (IEINRVNKIF…PKTALAQEFI (240 aa)) folds into the ABC transporter domain. 38–45 (GSSGAGKS) serves as a coordination point for ATP.

This sequence belongs to the ABC transporter superfamily. Methionine importer (TC 3.A.1.24) family. The complex is composed of two ATP-binding proteins (MetN), two transmembrane proteins (MetI) and a solute-binding protein (MetQ).

Its subcellular location is the cell inner membrane. The enzyme catalyses L-methionine(out) + ATP + H2O = L-methionine(in) + ADP + phosphate + H(+). It carries out the reaction D-methionine(out) + ATP + H2O = D-methionine(in) + ADP + phosphate + H(+). Part of the ABC transporter complex MetNIQ involved in methionine import. Responsible for energy coupling to the transport system. This is Methionine import ATP-binding protein MetN from Aliivibrio fischeri (strain ATCC 700601 / ES114) (Vibrio fischeri).